Reading from the N-terminus, the 178-residue chain is Caveolin-1 (178 aa).

Ser2 carries the N-acetylserine modification. Residue Ser2 is modified to Phosphoserine. The tract at residues 2–94 (SGGKYVDSEG…WKASFTTFTV (93 aa)) is required for homooligomerization. At 2-104 (SGGKYVDSEG…TKYWFYRLLS (103 aa)) the chain is on the cytoplasmic side. Lys5 carries the post-translational modification N6-acetyllysine; alternate. Lys5 participates in a covalent cross-link: Glycyl lysine isopeptide (Lys-Gly) (interchain with G-Cter in ubiquitin); alternate. Tyr6 carries the phosphotyrosine modification. The residue at position 9 (Ser9) is a Phosphoserine. A Phosphotyrosine; by ABL1 modification is found at Tyr14. Tyr25 is modified (phosphotyrosine). Residues Lys26, Lys30, Lys39, Lys47, and Lys57 each participate in a glycyl lysine isopeptide (Lys-Gly) (interchain with G-Cter in ubiquitin) cross-link. An interaction with CAVIN3 region spans residues 82 to 94 (DGIWKASFTTFTV). An intramembrane region (helical) is located at residues 105 to 125 (ALFGIPMALIWGIYFAILSFL). Residues 126 to 178 (HIWAVVPCIKSFLIEIQCISRVYSIYVHTFCDPLFEAIGKIFSNIRINMQKEI) lie on the Cytoplasmic side of the membrane. Residues 131–142 (VPCIKSFLIEIQ) form an interacts with SPRY1, SPRY2, SPRY3 and SPRY4 region. Residues Cys133, Cys143, and Cys156 are each lipidated (S-palmitoyl cysteine). Residues 149-160 (SIYVHTFCDPLF) form an interacts with SPRY1, SPRY2, and SPRY4 region. An interacts with SPRY1, SPRY2, SPRY3 and SPRY4 region spans residues 167–178 (FSNIRINMQKEI).

It belongs to the caveolin family. In terms of assembly, homooligomer. Interacts (via the N-terminus) with DPP4; the interaction is direct. Forms a stable heterooligomeric complex with CAV2 that targets to lipid rafts and drives caveolae formation. Interacts with PACSIN2; this interaction induces membrane tubulation. Interacts with BMX, BTK, CTNNB1, CDH1, GLIPR2, JUP, NOSTRIN, SNAP25 and STX1A. Interacts with SLC7A9. Interacts with TGFBR1. Interacts with CAVIN3 (via leucine-zipper domain) in a cholesterol-sensitive manner. Interacts with CAVIN1. Interacts with EHD2 in a cholesterol-dependent manner. Forms a ternary complex with UBXN6 and VCP; mediates CAV1 targeting to lysosomes for degradation. Interacts with ABCG1; this interaction regulates ABCG1-mediated cholesterol efflux. Interacts with NEU3; this interaction enhances NEU3 sialidase activity within caveola. Interacts (via C-terminus) with SPRY1, SPRY2 (via C-terminus), SPRY3, and SPRY4. Phosphorylated at Tyr-14 by ABL1 in response to oxidative stress. In terms of processing, ubiquitinated. Undergo monoubiquitination and multi- and/or polyubiquitination. Monoubiquitination of N-terminal lysines promotes integration in a ternary complex with UBXN6 and VCP which promotes oligomeric CAV1 targeting to lysosomes for degradation. Ubiquitinated by ZNRF1; leading to degradation and modulation of the TLR4-mediated immune response.

It localises to the golgi apparatus membrane. Its subcellular location is the cell membrane. The protein resides in the membrane. It is found in the caveola. The protein localises to the membrane raft. May act as a scaffolding protein within caveolar membranes. Forms a stable heterooligomeric complex with CAV2 that targets to lipid rafts and drives caveolae formation. Mediates the recruitment of CAVIN proteins (CAVIN1/2/3/4) to the caveolae. Interacts directly with G-protein alpha subunits and can functionally regulate their activity. Involved in the costimulatory signal essential for T-cell receptor (TCR)-mediated T-cell activation. Its binding to DPP4 induces T-cell proliferation and NF-kappa-B activation in a T-cell receptor/CD3-dependent manner. Recruits CTNNB1 to caveolar membranes and may regulate CTNNB1-mediated signaling through the Wnt pathway. Negatively regulates TGFB1-mediated activation of SMAD2/3 by mediating the internalization of TGFBR1 from membrane rafts leading to its subsequent degradation. Binds 20(S)-hydroxycholesterol (20(S)-OHC). This Otolemur garnettii (Small-eared galago) protein is Caveolin-1 (CAV1).